The chain runs to 694 residues: Elongation factor G (694 aa).

One can recognise a tr-type G domain in the interval 9-288 (SKIRNIGIMA…VIVKWLPSPK (280 aa)). Residues 18-25 (AHIDAGKT), 82-86 (DTPGH), and 136-139 (NKMD) contribute to the GTP site.

The protein belongs to the TRAFAC class translation factor GTPase superfamily. Classic translation factor GTPase family. EF-G/EF-2 subfamily.

It localises to the cytoplasm. Its function is as follows. Catalyzes the GTP-dependent ribosomal translocation step during translation elongation. During this step, the ribosome changes from the pre-translocational (PRE) to the post-translocational (POST) state as the newly formed A-site-bound peptidyl-tRNA and P-site-bound deacylated tRNA move to the P and E sites, respectively. Catalyzes the coordinated movement of the two tRNA molecules, the mRNA and conformational changes in the ribosome. This Chlamydia abortus (strain DSM 27085 / S26/3) (Chlamydophila abortus) protein is Elongation factor G.